Reading from the N-terminus, the 218-residue chain is Elongation factor Ts (218 aa).

Residues 82-85 are involved in Mg(2+) ion dislocation from EF-Tu; that stretch reads TDFV.

Belongs to the EF-Ts family.

The protein resides in the cytoplasm. Associates with the EF-Tu.GDP complex and induces the exchange of GDP to GTP. It remains bound to the aminoacyl-tRNA.EF-Tu.GTP complex up to the GTP hydrolysis stage on the ribosome. The polypeptide is Elongation factor Ts (Prochlorococcus marinus (strain MIT 9215)).